We begin with the raw amino-acid sequence, 217 residues long: Probable disulfide bond formation protein D (217 aa).

The signal sequence occupies residues 1–28; that stretch reads MKSSNKLMALGIVFSIAVLIVIGTIVYS. Cysteine 66 and cysteine 69 form a disulfide bridge.

The protein belongs to the thioredoxin family. DsbA subfamily.

Functionally, may be required for disulfide bond formation in some proteins. In Bacillus anthracis, this protein is Probable disulfide bond formation protein D (bdbD).